A 474-amino-acid polypeptide reads, in one-letter code: Ribulose bisphosphate carboxylase large chain (474 aa).

The substrate site is built by Asn122 and Thr172. Catalysis depends on Lys174, which acts as the Proton acceptor. Lys176 serves as a coordination point for substrate. Mg(2+)-binding residues include Lys200, Asp202, and Glu203. Lys200 is subject to N6-carboxylysine. The Proton acceptor role is filled by His293. Substrate contacts are provided by Arg294, His326, and Ser378.

This sequence belongs to the RuBisCO large chain family. Type I subfamily. Heterohexadecamer of 8 large chains and 8 small chains; disulfide-linked. The disulfide link is formed within the large subunit homodimers. Requires Mg(2+) as cofactor. Post-translationally, the disulfide bond which can form in the large chain dimeric partners within the hexadecamer appears to be associated with oxidative stress and protein turnover.

Its subcellular location is the carboxysome. The catalysed reaction is 2 (2R)-3-phosphoglycerate + 2 H(+) = D-ribulose 1,5-bisphosphate + CO2 + H2O. It catalyses the reaction D-ribulose 1,5-bisphosphate + O2 = 2-phosphoglycolate + (2R)-3-phosphoglycerate + 2 H(+). Functionally, ruBisCO catalyzes two reactions: the carboxylation of D-ribulose 1,5-bisphosphate, the primary event in carbon dioxide fixation, as well as the oxidative fragmentation of the pentose substrate in the photorespiration process. Both reactions occur simultaneously and in competition at the same active site. The chain is Ribulose bisphosphate carboxylase large chain from Gloeobacter violaceus (strain ATCC 29082 / PCC 7421).